Consider the following 401-residue polypeptide: uncharacterized protein (401 aa).

The next 7 membrane-spanning stretches (helical) occupy residues 44–64, 69–89, 99–119, 130–150, 201–221, 246–266, and 286–306; these read LKYTIVYILALVNAFFLLVFI, LYSFGISSLTQGFARLLFVLL, LVFNIFYWLFYVIVNIPLIIF, ILSTHYVVASNVFGFIFSIIP, FIYAGIYGFVNGTSLAILYIL, ILFYVNTFILIIAILMGSFVA, and LFFSPNLIATFFSVLFTGTVV.

It localises to the cell membrane. This is an uncharacterized protein from Mycoplasma pneumoniae (strain ATCC 29342 / M129 / Subtype 1) (Mycoplasmoides pneumoniae).